The primary structure comprises 267 residues: 5'-nucleotidase SurE (267 aa).

Positions 9, 10, 40, and 97 each coordinate a divalent metal cation.

This sequence belongs to the SurE nucleotidase family. It depends on a divalent metal cation as a cofactor.

The protein resides in the cytoplasm. It carries out the reaction a ribonucleoside 5'-phosphate + H2O = a ribonucleoside + phosphate. Nucleotidase that shows phosphatase activity on nucleoside 5'-monophosphates. The sequence is that of 5'-nucleotidase SurE from Helicobacter pylori (strain HPAG1).